Here is a 214-residue protein sequence, read N- to C-terminus: Galactokinase (214 aa).

Arginine 47, aspartate 53, histidine 54, and aspartate 56 together coordinate alpha-D-galactose. The ATP site is built by glycine 149, glycine 151, serine 153, and serine 154. Aspartate 199 is an alpha-D-galactose binding site. Aspartate 199 (proton acceptor) is an active-site residue.

This sequence belongs to the GHMP kinase family. GalK subfamily.

The catalysed reaction is alpha-D-galactose + ATP = alpha-D-galactose 1-phosphate + ADP + H(+). It functions in the pathway carbohydrate metabolism; galactose metabolism. In terms of biological role, galactokinase is a key enzyme in the galactose metabolism where it catalyzes the conversion of alpha-D-galactose to galactose 1-phosphate. Can also induce the transcription of the gal genes in response to the organism being challenged with galactose as the sole source of carbon. This Candida maltosa (Yeast) protein is Galactokinase.